The following is a 593-amino-acid chain: Pyruvate kinase isozyme A, chloroplastic (593 aa).

The segment at 57–94 (DEPQSSPVLVSENGSGGVLSSATQEYGRNAAPGTDSSS) is disordered. Residue R144 coordinates substrate. Positions 146, 178, and 179 each coordinate K(+). 146-149 (NMCH) is an ATP binding site. E343 is a binding site for Mg(2+). The substrate site is built by G366, D367, and S399. D367 contributes to the Mg(2+) binding site.

It belongs to the pyruvate kinase family. Requires Mg(2+) as cofactor. K(+) serves as cofactor. In terms of tissue distribution, highest levels in roots. Also found in stems, leaves and flowers.

The protein localises to the plastid. Its subcellular location is the chloroplast. The enzyme catalyses pyruvate + ATP = phosphoenolpyruvate + ADP + H(+). The protein operates within carbohydrate degradation; glycolysis; pyruvate from D-glyceraldehyde 3-phosphate: step 5/5. The polypeptide is Pyruvate kinase isozyme A, chloroplastic (Nicotiana tabacum (Common tobacco)).